A 299-amino-acid chain; its full sequence is MVEKSRLRIAMQKSGRLSKESQQLLEKCGIKIHLQQQRLLAFAENMPIDIMRVRDDDIPGLVLDSVVDLGIIGQNVLEEELLTRRAQGENPRYVTLRRLDFGTCRLSIALPIDQAWNGPKCLQNKRIATSYPHLLKQYLDKLGISFKSCLLNGSVEVAPRAGLADAICDLVSTGATLEANGLREVEVIYRSKAYLIQRDGELSLSKQALVDKLMIRIQGVIQARESKYIMMHAPTERLDNIISLLPGAERPTVLPLASDHNLVVMHMVSRETLFWETMENLKALGARSILVLPIEKMME.

The protein belongs to the ATP phosphoribosyltransferase family. Long subfamily. It depends on Mg(2+) as a cofactor.

The protein localises to the cytoplasm. It catalyses the reaction 1-(5-phospho-beta-D-ribosyl)-ATP + diphosphate = 5-phospho-alpha-D-ribose 1-diphosphate + ATP. Its pathway is amino-acid biosynthesis; L-histidine biosynthesis; L-histidine from 5-phospho-alpha-D-ribose 1-diphosphate: step 1/9. Its activity is regulated as follows. Feedback inhibited by histidine. Its function is as follows. Catalyzes the condensation of ATP and 5-phosphoribose 1-diphosphate to form N'-(5'-phosphoribosyl)-ATP (PR-ATP). Has a crucial role in the pathway because the rate of histidine biosynthesis seems to be controlled primarily by regulation of HisG enzymatic activity. This Baumannia cicadellinicola subsp. Homalodisca coagulata protein is ATP phosphoribosyltransferase.